The primary structure comprises 196 residues: Peroxynitrite isomerase (196 aa).

The interval 1–29 (MSDENPLQPPWLNAPPVDPYPYEESHDLR) is disordered. A compositionally biased stretch (pro residues) spans 7–19 (LQPPWLNAPPVDP). The short motif at 46–52 (GVWRGRG) is the GXWXGXG element. Residue His186 participates in heme b binding.

Belongs to the nitrobindin family. Homodimer. It depends on heme b as a cofactor.

The catalysed reaction is peroxynitrite = nitrate. It participates in nitrogen metabolism. Heme-binding protein able to scavenge peroxynitrite and to protect free L-tyrosine against peroxynitrite-mediated nitration, by acting as a peroxynitrite isomerase that converts peroxynitrite to nitrate. Therefore, this protein likely plays a role in peroxynitrite sensing and in the detoxification of reactive nitrogen and oxygen species (RNS and ROS, respectively). Is able to bind nitric oxide (NO) in vitro, but may act as a sensor of peroxynitrite levels in vivo. This Salinispora arenicola (strain CNS-205) protein is Peroxynitrite isomerase.